Here is a 448-residue protein sequence, read N- to C-terminus: Protein chibby homolog 2 (448 aa).

8 positions are modified to phosphoserine: Ser41, Ser86, Ser89, Ser97, Ser124, Ser144, Ser148, and Ser150. Positions Ala163–Val198 form a coiled coil. A disordered region spans residues Ser206–Leu226. Phosphoserine occurs at positions 212 and 225. Residues Lys242 to Tyr267 are a coiled coil. The segment at Gln270–Ser321 is disordered. The segment covering Glu279–Pro291 has biased composition (basic and acidic residues). Residues Ser335 and Ser338 each carry the phosphoserine modification. Residues Leu356–Ile414 adopt a coiled-coil conformation.

Belongs to the chibby family. SPERT subfamily. In terms of assembly, homodimer. Binds to NEK1.

The polypeptide is Protein chibby homolog 2 (CBY2) (Macaca fascicularis (Crab-eating macaque)).